Consider the following 612-residue polypeptide: Elongation factor 4 (612 aa).

In terms of domain architecture, tr-type G spans S12–A194. Residues D24–T29 and N141–D144 contribute to the GTP site.

Belongs to the TRAFAC class translation factor GTPase superfamily. Classic translation factor GTPase family. LepA subfamily.

Its subcellular location is the cell membrane. It catalyses the reaction GTP + H2O = GDP + phosphate + H(+). Required for accurate and efficient protein synthesis under certain stress conditions. May act as a fidelity factor of the translation reaction, by catalyzing a one-codon backward translocation of tRNAs on improperly translocated ribosomes. Back-translocation proceeds from a post-translocation (POST) complex to a pre-translocation (PRE) complex, thus giving elongation factor G a second chance to translocate the tRNAs correctly. Binds to ribosomes in a GTP-dependent manner. The protein is Elongation factor 4 of Bacillus pumilus (strain SAFR-032).